The primary structure comprises 353 residues: Small ribosomal subunit biogenesis GTPase RsgA (353 aa).

Residues 1 to 17 (MSKNKLSKGQQRRVNAN) show a composition bias toward polar residues. Residues 1-25 (MSKNKLSKGQQRRVNANHQRRLKTT) form a disordered region. A CP-type G domain is found at 104 to 274 (ASVLTRPDFY…VIDSPGVREF (171 aa)). GTP contacts are provided by residues 160 to 163 (NKID) and 214 to 222 (GQSGVGKSS). Positions 298, 303, 305, and 311 each coordinate Zn(2+).

The protein belongs to the TRAFAC class YlqF/YawG GTPase family. RsgA subfamily. In terms of assembly, monomer. Associates with 30S ribosomal subunit, binds 16S rRNA. The cofactor is Zn(2+).

Its subcellular location is the cytoplasm. In terms of biological role, one of several proteins that assist in the late maturation steps of the functional core of the 30S ribosomal subunit. Helps release RbfA from mature subunits. May play a role in the assembly of ribosomal proteins into the subunit. Circularly permuted GTPase that catalyzes slow GTP hydrolysis, GTPase activity is stimulated by the 30S ribosomal subunit. This chain is Small ribosomal subunit biogenesis GTPase RsgA, found in Klebsiella pneumoniae (strain 342).